The following is a 483-amino-acid chain: UDP-N-acetylmuramyl-tripeptide synthetase (483 aa).

A UDP-N-acetyl-alpha-D-muramoyl-L-alanyl-D-glutamate-binding site is contributed by Ser-43. 116–122 is a binding site for ATP; sequence GTKGKTT. UDP-N-acetyl-alpha-D-muramoyl-L-alanyl-D-glutamate is bound by residues 160 to 161, Ser-187, and Arg-195; that span reads TT. The residue at position 229 (Lys-229) is an N6-carboxylysine.

It belongs to the MurCDEF family. MurE subfamily. Post-translationally, carboxylation is probably crucial for Mg(2+) binding and, consequently, for the gamma-phosphate positioning of ATP.

It is found in the cytoplasm. It functions in the pathway cell wall biogenesis; peptidoglycan biosynthesis. In terms of biological role, catalyzes the addition of an amino acid to the nucleotide precursor UDP-N-acetylmuramoyl-L-alanyl-D-glutamate (UMAG) in the biosynthesis of bacterial cell-wall peptidoglycan. In Lactococcus lactis subsp. cremoris (strain MG1363), this protein is UDP-N-acetylmuramyl-tripeptide synthetase.